The primary structure comprises 698 residues: PWWP domain-containing DNA repair factor 3A (698 aa).

Disordered regions lie at residues 102-145 (TSLS…EDDQ) and 159-386 (CSPK…EEPP). Position 105 is a phosphoserine (S105). The segment covering 129 to 139 (SQVSSAPSPSF) has biased composition (polar residues). Phosphoserine is present on residues S165, S168, and S170. Over residues 200–211 (DESQNGSGSQLD) the composition is skewed to polar residues. 2 stretches are compositionally biased toward basic and acidic residues: residues 212–235 (HGQE…RGKA) and 341–350 (RAGDSDRPEE). 2 positions are modified to phosphoserine: S355 and S356. The segment covering 370–384 (EEEEEEEEEEEEEEE) has biased composition (acidic residues). The region spanning 399–460 (VGMLVWLKYQ…KHFDCKEKHA (62 aa)) is the PWWP domain.

It belongs to the PWWP3A family. Interacts with TP53BP1 (via BRCT domain); the interaction is not dependent on its phosphorylation status. Binds nucleosomes. Interacts with trimethylated 'Lys-36' of histone H3 (H3K36me3) (in vitro).

It localises to the nucleus. In terms of biological role, involved in the DNA damage response pathway by contributing to the maintenance of chromatin architecture. Recruited to the vicinity of DNA breaks by TP53BP1 and plays an accessory role to facilitate damage-induced chromatin changes and promoting chromatin relaxation. Required for efficient DNA repair and cell survival following DNA damage. This Rattus norvegicus (Rat) protein is PWWP domain-containing DNA repair factor 3A.